Consider the following 119-residue polypeptide: Large ribosomal subunit protein bL20 (119 aa).

It belongs to the bacterial ribosomal protein bL20 family.

In terms of biological role, binds directly to 23S ribosomal RNA and is necessary for the in vitro assembly process of the 50S ribosomal subunit. It is not involved in the protein synthesizing functions of that subunit. This chain is Large ribosomal subunit protein bL20, found in Herminiimonas arsenicoxydans.